We begin with the raw amino-acid sequence, 108 residues long: Thiosulfate sulfurtransferase GlpE (108 aa).

One can recognise a Rhodanese domain in the interval 17–105 (QEKEAVLVDI…WQRQFPAEVA (89 aa)). Cysteine 65 functions as the Cysteine persulfide intermediate in the catalytic mechanism.

The protein belongs to the GlpE family.

It is found in the cytoplasm. It catalyses the reaction thiosulfate + hydrogen cyanide = thiocyanate + sulfite + 2 H(+). The enzyme catalyses thiosulfate + [thioredoxin]-dithiol = [thioredoxin]-disulfide + hydrogen sulfide + sulfite + 2 H(+). Functionally, transferase that catalyzes the transfer of sulfur from thiosulfate to thiophilic acceptors such as cyanide or dithiols. May function in a CysM-independent thiosulfate assimilation pathway by catalyzing the conversion of thiosulfate to sulfite, which can then be used for L-cysteine biosynthesis. This is Thiosulfate sulfurtransferase GlpE from Escherichia coli O45:K1 (strain S88 / ExPEC).